We begin with the raw amino-acid sequence, 254 residues long: 5-oxoprolinase subunit A (254 aa).

The protein belongs to the LamB/PxpA family. In terms of assembly, forms a complex composed of PxpA, PxpB and PxpC.

The catalysed reaction is 5-oxo-L-proline + ATP + 2 H2O = L-glutamate + ADP + phosphate + H(+). Its function is as follows. Catalyzes the cleavage of 5-oxoproline to form L-glutamate coupled to the hydrolysis of ATP to ADP and inorganic phosphate. The protein is 5-oxoprolinase subunit A of Carboxydothermus hydrogenoformans (strain ATCC BAA-161 / DSM 6008 / Z-2901).